The chain runs to 271 residues: Auxin-responsive protein IAA5 (271 aa).

Residues 1-96 are disordered; the sequence is MSPPLEPHDY…RHGASSGSVA (96 aa). Low complexity-rich tracts occupy residues 14–33 and 40–50; these read SAAAASPTPSSSSCSSSPNP and PRLTLRLGLPG. An EAR-like (transcriptional repression) motif is present at residues 44–48; the sequence is LRLGL. The region spanning 151-255 is the PB1 domain; that stretch reads PLYVKVSMDG…RKLKIMRGSD (105 aa).

This sequence belongs to the Aux/IAA family. In terms of assembly, homodimers and heterodimers.

Its subcellular location is the nucleus. Its function is as follows. Aux/IAA proteins are short-lived transcriptional factors that function as repressors of early auxin response genes at low auxin concentrations. In Oryza sativa subsp. japonica (Rice), this protein is Auxin-responsive protein IAA5 (IAA5).